A 23-amino-acid chain; its full sequence is Paralytic peptide 1 (23 aa).

A disulfide bond links cysteine 7 and cysteine 19.

The protein belongs to the GBP/PSP1/paralytic peptide family. As to expression, hemolymph.

In terms of biological role, causes rapid, rigid paralysis when injected into Lepidopteran larvae. The physiological role may be to reduce hemolymph loss following injury and promote wound healing. In Spodoptera exigua (Beet armyworm), this protein is Paralytic peptide 1.